The sequence spans 113 residues: UPF0122 protein M6_Spy0905 (113 aa).

Belongs to the UPF0122 family.

In terms of biological role, might take part in the signal recognition particle (SRP) pathway. This is inferred from the conservation of its genetic proximity to ftsY/ffh. May be a regulatory protein. This is UPF0122 protein M6_Spy0905 from Streptococcus pyogenes serotype M6 (strain ATCC BAA-946 / MGAS10394).